Reading from the N-terminus, the 313-residue chain is Olfactory receptor 10G3 (313 aa).

At 1–25 (MERINSTLLTAFILTGIPYPLRLRT) the chain is on the extracellular side. N-linked (GlcNAc...) asparagine glycosylation is present at Asn5. The helical transmembrane segment at 26–46 (LFFVFFFLIYILTQLGNLLIL) threads the bilayer. The Cytoplasmic segment spans residues 47 to 54 (ITVWADPR). Residues 55–76 (LHARPMYIFLGVLSVIDMSISS) traverse the membrane as a helical segment. Topologically, residues 77 to 100 (IIVPRLMMNFTLGVKPIPFGGCVA) are extracellular. Asn85 is a glycosylation site (N-linked (GlcNAc...) asparagine). Cysteines 98 and 190 form a disulfide. Residues 101–121 (QLYFYHFLGSTQCFLYTLMAY) traverse the membrane as a helical segment. Residues 122–140 (DRYLAICQPLRYPVLMTAK) are Cytoplasmic-facing. The chain crosses the membrane as a helical span at residues 141-161 (LSALLVAGAWMAGSIHGALQA). Over 162 to 198 (ILTFRLPYCGPNQVDYFFCDIPAVLRLACADTTVNEL) the chain is Extracellular. The chain crosses the membrane as a helical span at residues 199–218 (VTFVDIGVVVASCFSLILLS). The Cytoplasmic portion of the chain corresponds to 219 to 238 (YIQIIQAILRIHTADGRRRA). Residues 239-259 (FSTCGAHVTVVTVYYVPCAFI) form a helical membrane-spanning segment. Topologically, residues 260–270 (YLRPETNSPLD) are extracellular. A helical transmembrane segment spans residues 271–291 (GAAALVPTAITPFLNPLIYTL). The Cytoplasmic segment spans residues 292-313 (RNQEVKLALKRMLRSPRTPSEV).

This sequence belongs to the G-protein coupled receptor 1 family.

Its subcellular location is the cell membrane. Functionally, odorant receptor. The protein is Olfactory receptor 10G3 (OR10G3) of Homo sapiens (Human).